The primary structure comprises 800 residues: DNA topoisomerase 4 subunit A (800 aa).

The 465-residue stretch at 31 to 495 folds into the Topo IIA-type catalytic domain; it reads LPDVRDGLKP…EIEEIKIDKE (465 aa). Residue Y119 is the O-(5'-phospho-DNA)-tyrosine intermediate of the active site.

Belongs to the type II topoisomerase GyrA/ParC subunit family. ParC type 2 subfamily. As to quaternary structure, heterotetramer composed of ParC and ParE.

Its subcellular location is the cell membrane. The enzyme catalyses ATP-dependent breakage, passage and rejoining of double-stranded DNA.. In terms of biological role, topoisomerase IV is essential for chromosome segregation. It relaxes supercoiled DNA. Performs the decatenation events required during the replication of a circular DNA molecule. The protein is DNA topoisomerase 4 subunit A of Staphylococcus aureus (strain N315).